The following is a 98-amino-acid chain: MEKMSHDPIAADIGTQVSDNALHGVTAGSTALTSVTGLVPAGADEVSAQAATAFTSEGIQLLASNASAQDQLHRAGEAVQDVARTYSQIDDGAAGVFA.

A PE domain is found at 1–90; that stretch reads MEKMSHDPIA…DVARTYSQID (90 aa).

Belongs to the mycobacterial PE family. As to quaternary structure, interacts with PPE68. PE35/PPE68 complex interacts with human TLR2.

The protein localises to the secreted. Its subcellular location is the cell surface. In terms of biological role, plays a major role in RD1-associated pathogenesis, and may contribute to the establishment and maintenance of M.tuberculosis infection. Together with PPE68, stimulates the secretion of IL-10 and MCP-1 from human macrophages, via the interaction with human Toll-like receptor 2 (TLR2). The protein is PE family immunomodulator PE35 (PE35) of Mycobacterium tuberculosis (strain CDC 1551 / Oshkosh).